We begin with the raw amino-acid sequence, 466 residues long: Muscarinic acetylcholine receptor M2 (466 aa).

At 1 to 22 (MNNSTNSSNSGLALTSPYKTFE) the chain is on the extracellular side. N2, N3, and N6 each carry an N-linked (GlcNAc...) asparagine glycan. The helical transmembrane segment at 23 to 45 (VVFIVLVAGSLSLVTIIGNILVM) threads the bilayer. Topologically, residues 46–59 (VSIKVNRHLQTVNN) are cytoplasmic. The helical transmembrane segment at 60 to 80 (YFLFSLACADLIIGVFSMNLY) threads the bilayer. The Extracellular segment spans residues 81–97 (TLYTVIGYWPLGPVVCD). C96 and C176 form a disulfide bridge. The helical transmembrane segment at 98-119 (LWLALDYVVSNASVMNLLIISF) threads the bilayer. An Important for signaling motif is present at residues 120-122 (DRY). Over 120–139 (DRYFCVTKPLTYPVKRTTKM) the chain is Cytoplasmic. A helical membrane pass occupies residues 140 to 162 (AGMMIAAAWVLSFILWAPAILFW). The Extracellular portion of the chain corresponds to 163 to 184 (QFIVGVRTVEDGECYIQFFSNA). The chain crosses the membrane as a helical span at residues 185–209 (AVTFGTAIAAFYLPVIIMTVLYWHI). Residues 210–387 (SRASKSRIKK…PPSREKKVTR (178 aa)) lie on the Cytoplasmic side of the membrane. Positions 218-320 (KKDKKEPVAN…SLGHSKDENS (103 aa)) are disordered. S232 carries the phosphoserine modification. Residues 254-270 (ALEHNKIQNGKAPRDAV) show a composition bias toward basic and acidic residues. Composition is skewed to polar residues over residues 284–293 (NDSTSVSAVA) and 304–313 (DENTVSTSLG). Residues 388–410 (TILAILLAFIITWAPYNVMVLIN) traverse the membrane as a helical segment. At 411–418 (TFCAPCIP) the chain is on the extracellular side. Residues C413 and C416 are joined by a disulfide bond. The helical transmembrane segment at 419–442 (NTVWTIGYWLCYINSTINPACYAL) threads the bilayer. Residues 436 to 440 (NPACY) carry the Important for signaling motif. Topologically, residues 443–466 (CNATFKKTFKHLLMCHYKNIGATR) are cytoplasmic. Phosphothreonine is present on residues T446, T450, and T465.

The protein belongs to the G-protein coupled receptor 1 family. Muscarinic acetylcholine receptor subfamily. CHRM2 sub-subfamily. As to quaternary structure, interacts with ARRB1 and ARRB2. Interacts with RACK1; the interaction regulates CHRM2 internalization. Phosphorylated in response to agonist treatment.

The protein localises to the cell membrane. The protein resides in the postsynaptic cell membrane. The muscarinic acetylcholine receptor mediates various cellular responses, including inhibition of adenylate cyclase, breakdown of phosphoinositides and modulation of potassium channels through the action of G proteins. Primary transducing effect is adenylate cyclase inhibition. The chain is Muscarinic acetylcholine receptor M2 (CHRM2) from Sus scrofa (Pig).